A 370-amino-acid chain; its full sequence is Phosphoserine aminotransferase (370 aa).

L-glutamate is bound at residue Arg-42. Residues Trp-108, Thr-158, Asp-182, and Gln-205 each coordinate pyridoxal 5'-phosphate. Lys-206 is modified (N6-(pyridoxal phosphate)lysine). Residue 247-248 (NT) coordinates pyridoxal 5'-phosphate.

It belongs to the class-V pyridoxal-phosphate-dependent aminotransferase family. SerC subfamily. As to quaternary structure, homodimer. Pyridoxal 5'-phosphate serves as cofactor.

It is found in the cytoplasm. The enzyme catalyses O-phospho-L-serine + 2-oxoglutarate = 3-phosphooxypyruvate + L-glutamate. It carries out the reaction 4-(phosphooxy)-L-threonine + 2-oxoglutarate = (R)-3-hydroxy-2-oxo-4-phosphooxybutanoate + L-glutamate. The protein operates within amino-acid biosynthesis; L-serine biosynthesis; L-serine from 3-phospho-D-glycerate: step 2/3. Its pathway is cofactor biosynthesis; pyridoxine 5'-phosphate biosynthesis; pyridoxine 5'-phosphate from D-erythrose 4-phosphate: step 3/5. Its function is as follows. Catalyzes the reversible conversion of 3-phosphohydroxypyruvate to phosphoserine and of 3-hydroxy-2-oxo-4-phosphonooxybutanoate to phosphohydroxythreonine. The chain is Phosphoserine aminotransferase from Albidiferax ferrireducens (strain ATCC BAA-621 / DSM 15236 / T118) (Rhodoferax ferrireducens).